Here is a 62-residue protein sequence, read N- to C-terminus: Cytotoxin-like basic protein (62 aa).

4 disulfides stabilise this stretch: cysteine 3-cysteine 22, cysteine 15-cysteine 40, cysteine 44-cysteine 55, and cysteine 56-cysteine 61.

The protein belongs to the three-finger toxin family. Short-chain subfamily. Orphan group XV sub-subfamily. In terms of tissue distribution, expressed by the venom gland.

Its subcellular location is the secreted. The protein resides in the target cell membrane. Its function is as follows. Has low cytotoxic activity. This Naja naja (Indian cobra) protein is Cytotoxin-like basic protein.